Reading from the N-terminus, the 487-residue chain is 1-hydroxycarotenoid 3,4-desaturase (487 aa).

FAD is bound by residues Gly-12, Glu-31, Lys-39, 55–56 (SL), Val-247, Asn-275, Leu-431, Gly-461, and 468–469 (GI).

This sequence belongs to the carotenoid/retinoid oxidoreductase family. As to quaternary structure, monomer.

It carries out the reaction rhodopin + A = (3E)-3,4-didehydrorhodopin + AH2. The enzyme catalyses 1'-hydroxy-gamma-carotene + A = 1'-hydroxytorulene + AH2. The catalysed reaction is 1-hydroxy-all-trans-1,2-dihydro-neurosporene + A = demethylspheroidene + AH2. It catalyses the reaction 1,1'-dihydroxy-1,1',2,2'-tetrahydroneurosporene + A = 1'-hydroxy-demethylspheroidene + AH2. It carries out the reaction 1,1'-dihydroxy-1,1',2,2'-tetrahydrolycopene + A = 1,1'-dihydroxy-3,4-didehydro-1,2-dihydrolycopene + AH2. The protein operates within carotenoid biosynthesis. Catalyzes the introduction of a C-3,4 double bond into 1'-hydroxy-gamma-carotene and rhodopin (1-hydroxylycopene) to yield 1'-hydroxytorulene and (3E)-3,4-didehydrorhodopin, respectively. Can also use 1-hydroxy-all-trans-1,2-dihydro-neurosporene, 1,1'-dihydroxy-1,1',2,2'-tetrahydroneurosporene and 1,1'-dihydroxy-1,1',2,2'-tetrahydrolycopene. Probably involved in the synthesis of myxol, a gamma-carotene derivative. May use FAD as a proton acceptor. The sequence is that of 1-hydroxycarotenoid 3,4-desaturase from Nonlabens dokdonensis (strain DSM 17205 / KCTC 12402 / DSW-6) (Donghaeana dokdonensis).